The primary structure comprises 1255 residues: DNA-directed RNA polymerase subunit beta' (1255 aa).

Zn(2+)-binding residues include Cys60, Cys62, Cys77, and Cys80. Asp503, Asp505, and Asp507 together coordinate Mg(2+). 4 residues coordinate Zn(2+): Cys875, Cys950, Cys957, and Cys960.

This sequence belongs to the RNA polymerase beta' chain family. As to quaternary structure, the RNAP catalytic core consists of 2 alpha, 1 beta, 1 beta' and 1 omega subunit. When a sigma factor is associated with the core the holoenzyme is formed, which can initiate transcription. Requires Mg(2+) as cofactor. The cofactor is Zn(2+).

It carries out the reaction RNA(n) + a ribonucleoside 5'-triphosphate = RNA(n+1) + diphosphate. In terms of biological role, DNA-dependent RNA polymerase catalyzes the transcription of DNA into RNA using the four ribonucleoside triphosphates as substrates. The protein is DNA-directed RNA polymerase subunit beta' of Mycoplasma capricolum subsp. capricolum (strain California kid / ATCC 27343 / NCTC 10154).